Consider the following 834-residue polypeptide: Probable receptor-like protein kinase At2g23200 (834 aa).

The signal sequence occupies residues 1 to 28 (MENFCFQDSVSLFITIMVLVLLPRLSLS). The Extracellular portion of the chain corresponds to 29-405 (DTSTYTRPEN…SSSRVHIITG (377 aa)). N-linked (GlcNAc...) asparagine glycans are attached at residues Asn61, Asn149, Asn221, Asn246, Asn277, Asn289, Asn314, Asn352, Asn361, and Asn394. The helical transmembrane segment at 406–426 (CAVAAAAASALVFSLLFMVFL) threads the bilayer. Over 427–834 (KRRRSKKTKP…FSQLKISDAR (408 aa)) the chain is Cytoplasmic. One can recognise a Protein kinase domain in the interval 488–761 (FDEQLLIGKG…RDVIWDLEYV (274 aa)). ATP contacts are provided by residues 494–502 (IGKGGFGYV) and Lys516. Catalysis depends on Asp613, which acts as the Proton acceptor.

Belongs to the protein kinase superfamily. Ser/Thr protein kinase family.

The protein resides in the membrane. This is Probable receptor-like protein kinase At2g23200 from Arabidopsis thaliana (Mouse-ear cress).